We begin with the raw amino-acid sequence, 139 residues long: Nucleoside diphosphate kinase (139 aa).

6 residues coordinate ATP: Lys-10, Phe-58, Arg-86, Thr-92, Arg-103, and Asn-113. His-116 (pros-phosphohistidine intermediate) is an active-site residue.

It belongs to the NDK family. Homotetramer. The cofactor is Mg(2+).

It localises to the cytoplasm. It catalyses the reaction a 2'-deoxyribonucleoside 5'-diphosphate + ATP = a 2'-deoxyribonucleoside 5'-triphosphate + ADP. The catalysed reaction is a ribonucleoside 5'-diphosphate + ATP = a ribonucleoside 5'-triphosphate + ADP. In terms of biological role, major role in the synthesis of nucleoside triphosphates other than ATP. The ATP gamma phosphate is transferred to the NDP beta phosphate via a ping-pong mechanism, using a phosphorylated active-site intermediate. The sequence is that of Nucleoside diphosphate kinase from Caulobacter vibrioides (strain ATCC 19089 / CIP 103742 / CB 15) (Caulobacter crescentus).